Consider the following 975-residue polypeptide: Glycine dehydrogenase (decarboxylating) (975 aa).

Lys702 carries the N6-(pyridoxal phosphate)lysine modification.

Belongs to the GcvP family. In terms of assembly, the glycine cleavage system is composed of four proteins: P, T, L and H. Requires pyridoxal 5'-phosphate as cofactor.

It catalyses the reaction N(6)-[(R)-lipoyl]-L-lysyl-[glycine-cleavage complex H protein] + glycine + H(+) = N(6)-[(R)-S(8)-aminomethyldihydrolipoyl]-L-lysyl-[glycine-cleavage complex H protein] + CO2. Functionally, the glycine cleavage system catalyzes the degradation of glycine. The P protein binds the alpha-amino group of glycine through its pyridoxal phosphate cofactor; CO(2) is released and the remaining methylamine moiety is then transferred to the lipoamide cofactor of the H protein. The chain is Glycine dehydrogenase (decarboxylating) from Xanthomonas campestris pv. campestris (strain 8004).